A 269-amino-acid chain; its full sequence is Eukaryotic translation initiation factor 3 subunit G-1 (269 aa).

The RRM domain maps to 188-266 (AAIRISNLSE…LILSVEWSKP (79 aa)).

This sequence belongs to the eIF-3 subunit G family. As to quaternary structure, component of the eukaryotic translation initiation factor 3 (eIF-3) complex. The eIF-3 complex interacts with pix.

It localises to the cytoplasm. Its function is as follows. RNA-binding component of the eukaryotic translation initiation factor 3 (eIF-3) complex, which is involved in protein synthesis of a specialized repertoire of mRNAs and, together with other initiation factors, stimulates binding of mRNA and methionyl-tRNAi to the 40S ribosome. The eIF-3 complex specifically targets and initiates translation of a subset of mRNAs involved in cell proliferation. This subunit can bind 18S rRNA. In Drosophila willistoni (Fruit fly), this protein is Eukaryotic translation initiation factor 3 subunit G-1.